Here is a 315-residue protein sequence, read N- to C-terminus: Bifunctional protein FolD (315 aa).

NADP(+) is bound by residues 166–168, S193, and I234; that span reads GRS.

Belongs to the tetrahydrofolate dehydrogenase/cyclohydrolase family. Homodimer.

The catalysed reaction is (6R)-5,10-methylene-5,6,7,8-tetrahydrofolate + NADP(+) = (6R)-5,10-methenyltetrahydrofolate + NADPH. It carries out the reaction (6R)-5,10-methenyltetrahydrofolate + H2O = (6R)-10-formyltetrahydrofolate + H(+). It participates in one-carbon metabolism; tetrahydrofolate interconversion. In terms of biological role, catalyzes the oxidation of 5,10-methylenetetrahydrofolate to 5,10-methenyltetrahydrofolate and then the hydrolysis of 5,10-methenyltetrahydrofolate to 10-formyltetrahydrofolate. The chain is Bifunctional protein FolD from Treponema pallidum (strain Nichols).